A 54-amino-acid chain; its full sequence is Light-harvesting protein B-880 beta chain (54 aa).

Residues 1–20 lie on the Cytoplasmic side of the membrane; it reads AEDRSSLSGVSDAEAKEFHA. The a bacteriochlorophyll site is built by His-19 and His-37. The chain crosses the membrane as a helical span at residues 21–43; it reads LFVSSFTAFIVIAVLAHVLAWAW. At 44–54 the chain is on the periplasmic side; the sequence is RPWIPGPKGWA.

Belongs to the antenna complex beta subunit family. As to quaternary structure, the core complex is formed by different alpha and beta chains, binding bacteriochlorophyll molecules, and arranged most probably in tetrameric structures disposed around the reaction center. The non-pigmented gamma chains may constitute additional components.

The protein resides in the cell inner membrane. Functionally, antenna complexes are light-harvesting systems, which transfer the excitation energy to the reaction centers. This Rhodoblastus acidophilus (Rhodopseudomonas acidophila) protein is Light-harvesting protein B-880 beta chain.